The primary structure comprises 279 residues: Tryptophan synthase alpha chain (279 aa).

Active-site proton acceptor residues include Glu-49 and Asp-60.

It belongs to the TrpA family. Tetramer of two alpha and two beta chains.

It carries out the reaction (1S,2R)-1-C-(indol-3-yl)glycerol 3-phosphate + L-serine = D-glyceraldehyde 3-phosphate + L-tryptophan + H2O. Its pathway is amino-acid biosynthesis; L-tryptophan biosynthesis; L-tryptophan from chorismate: step 5/5. The alpha subunit is responsible for the aldol cleavage of indoleglycerol phosphate to indole and glyceraldehyde 3-phosphate. This chain is Tryptophan synthase alpha chain, found in Nitrosospira multiformis (strain ATCC 25196 / NCIMB 11849 / C 71).